Consider the following 487-residue polypeptide: Aspartyl/glutamyl-tRNA(Asn/Gln) amidotransferase subunit B (487 aa).

The protein belongs to the GatB/GatE family. GatB subfamily. In terms of assembly, heterotrimer of A, B and C subunits.

It carries out the reaction L-glutamyl-tRNA(Gln) + L-glutamine + ATP + H2O = L-glutaminyl-tRNA(Gln) + L-glutamate + ADP + phosphate + H(+). It catalyses the reaction L-aspartyl-tRNA(Asn) + L-glutamine + ATP + H2O = L-asparaginyl-tRNA(Asn) + L-glutamate + ADP + phosphate + 2 H(+). In terms of biological role, allows the formation of correctly charged Asn-tRNA(Asn) or Gln-tRNA(Gln) through the transamidation of misacylated Asp-tRNA(Asn) or Glu-tRNA(Gln) in organisms which lack either or both of asparaginyl-tRNA or glutaminyl-tRNA synthetases. The reaction takes place in the presence of glutamine and ATP through an activated phospho-Asp-tRNA(Asn) or phospho-Glu-tRNA(Gln). This is Aspartyl/glutamyl-tRNA(Asn/Gln) amidotransferase subunit B from Leptospira biflexa serovar Patoc (strain Patoc 1 / Ames).